We begin with the raw amino-acid sequence, 565 residues long: Galactoside 2-alpha-L-fucosyltransferase (565 aa).

The Cytoplasmic portion of the chain corresponds to 1–43 (MNMLIKRVIAIKNPRGDDNNNNKLSDLETLTDKCTTCPLTLMR). Residues 44-64 (VMAFFVVSFMLFSVLFSLSVV) form a helical; Signal-anchor for type II membrane protein membrane-spanning segment. At 65 to 565 (LRDPPSDAAI…MSWGLKLVDN (501 aa)) the chain is on the lumenal side. 4 N-linked (GlcNAc...) asparagine glycosylation sites follow: Asn-159, Asn-263, Asn-407, and Asn-509.

The protein belongs to the glycosyltransferase 37 family.

The protein localises to the golgi apparatus. Its subcellular location is the golgi stack membrane. The protein operates within protein modification; protein glycosylation. Functionally, involved in cell wall biosynthesis. Adds the terminal fucosyl residue on xyloglucan side chains. The protein is Galactoside 2-alpha-L-fucosyltransferase (FT1) of Pisum sativum (Garden pea).